The sequence spans 40 residues: Photosystem II reaction center protein J (40 aa).

Residues 8 to 28 (IPLWLIGTVTGIPVIGSMGIF) traverse the membrane as a helical segment.

This sequence belongs to the PsbJ family. In terms of assembly, PSII is composed of 1 copy each of membrane proteins PsbA, PsbB, PsbC, PsbD, PsbE, PsbF, PsbH, PsbI, PsbJ, PsbK, PsbL, PsbM, PsbT, PsbX, PsbY, PsbZ, Psb30/Ycf12, at least 3 peripheral proteins of the oxygen-evolving complex and a large number of cofactors. It forms dimeric complexes.

It localises to the plastid. Its subcellular location is the chloroplast thylakoid membrane. One of the components of the core complex of photosystem II (PSII). PSII is a light-driven water:plastoquinone oxidoreductase that uses light energy to abstract electrons from H(2)O, generating O(2) and a proton gradient subsequently used for ATP formation. It consists of a core antenna complex that captures photons, and an electron transfer chain that converts photonic excitation into a charge separation. The sequence is that of Photosystem II reaction center protein J from Illicium oligandrum (Star anise).